Here is a 393-residue protein sequence, read N- to C-terminus: Bifunctional enzyme IspD/IspF (393 aa).

Residues 1-234 (MTISQRTAAI…ARLAAQLGDI (234 aa)) form a 2-C-methyl-D-erythritol 4-phosphate cytidylyltransferase region. The 2-C-methyl-D-erythritol 2,4-cyclodiphosphate synthase stretch occupies residues 235–393 (RTGTGYDVHA…SATIRLPWSA (159 aa)). A divalent metal cation-binding residues include aspartate 241 and histidine 243. 4-CDP-2-C-methyl-D-erythritol 2-phosphate-binding positions include 241–243 (DVH) and 267–268 (HS). Histidine 275 serves as a coordination point for a divalent metal cation. Residues 289-291 (DIG), 365-368 (TTSE), phenylalanine 372, and arginine 375 each bind 4-CDP-2-C-methyl-D-erythritol 2-phosphate.

In the N-terminal section; belongs to the IspD/TarI cytidylyltransferase family. IspD subfamily. It in the C-terminal section; belongs to the IspF family. The cofactor is a divalent metal cation.

It catalyses the reaction 2-C-methyl-D-erythritol 4-phosphate + CTP + H(+) = 4-CDP-2-C-methyl-D-erythritol + diphosphate. It carries out the reaction 4-CDP-2-C-methyl-D-erythritol 2-phosphate = 2-C-methyl-D-erythritol 2,4-cyclic diphosphate + CMP. Its pathway is isoprenoid biosynthesis; isopentenyl diphosphate biosynthesis via DXP pathway; isopentenyl diphosphate from 1-deoxy-D-xylulose 5-phosphate: step 2/6. It functions in the pathway isoprenoid biosynthesis; isopentenyl diphosphate biosynthesis via DXP pathway; isopentenyl diphosphate from 1-deoxy-D-xylulose 5-phosphate: step 4/6. Its function is as follows. Bifunctional enzyme that catalyzes the formation of 4-diphosphocytidyl-2-C-methyl-D-erythritol from CTP and 2-C-methyl-D-erythritol 4-phosphate (MEP) (IspD), and catalyzes the conversion of 4-diphosphocytidyl-2-C-methyl-D-erythritol 2-phosphate (CDP-ME2P) to 2-C-methyl-D-erythritol 2,4-cyclodiphosphate (ME-CPP) with a corresponding release of cytidine 5-monophosphate (CMP) (IspF). The chain is Bifunctional enzyme IspD/IspF from Bradyrhizobium sp. (strain BTAi1 / ATCC BAA-1182).